Here is a 333-residue protein sequence, read N- to C-terminus: Geminin coiled-coil domain-containing protein 1 (333 aa).

Residues 83-118 (QLYRNKQLQDTLLQKEEELARLHEENNHLRQYLNST) are a coiled coil. Residues 145–154 (KEKRKPKEHR) are compositionally biased toward basic residues. Residues 145–165 (KEKRKPKEHRHSPAEIPQFKT) are disordered.

Belongs to the GEMC1 family. In terms of processing, highly phosphorylated by CDK2; stimulates initiation of DNA replication.

Its subcellular location is the nucleus. Functionally, regulator of DNA replication. Promotes initiation of chromosomal DNA replication by mediating TOPBP1- and CDK2-dependent recruitment of CDC45L onto replication origins. In Mus musculus (Mouse), this protein is Geminin coiled-coil domain-containing protein 1 (Gmnc).